Consider the following 485-residue polypeptide: Cys-Gly metallodipeptidase DUG1 (485 aa).

Histidine 109 is a Zn(2+) binding site. The active site involves aspartate 111. Aspartate 144 is a binding site for Zn(2+). Catalysis depends on glutamate 178, which acts as the Proton acceptor. Glutamate 179, aspartate 207, and histidine 457 together coordinate Zn(2+).

This sequence belongs to the peptidase M20A family. In terms of assembly, homodimer. Component of the GSH degradosomal complex. Zn(2+) is required as a cofactor. It depends on Mn(2+) as a cofactor.

It localises to the cytoplasm. Its function is as follows. Catalytic component of the GSH degradosomal complex involved in the degradation of glutathione (GSH) and other peptides containing a gamma-glu-X bond. Also functions as a dipeptidase with high specificity for Cys-Gly and no activity toward tri- or tetrapeptides. In Candida albicans (strain SC5314 / ATCC MYA-2876) (Yeast), this protein is Cys-Gly metallodipeptidase DUG1 (DUG1).